Reading from the N-terminus, the 212-residue chain is ER lumen protein-retaining receptor 1 (212 aa).

Residues 1-4 (MNLF) are Lumenal-facing. The helical transmembrane segment at 5 to 24 (RFLGDLSHLLAIILLLLKIW) threads the bilayer. Over 25–32 (KSRSCAGI) the chain is Cytoplasmic. The helical transmembrane segment at 33 to 52 (SGKSQVLFAVVFTARYLDLF) threads the bilayer. Positions 47 to 48 (RY) are interaction with the K-D-E-L motif on target proteins. Topologically, residues 53 to 58 (TNYISL) are lumenal. A helical membrane pass occupies residues 59-79 (YNTCMKVVYIACSFTTVWMIY). Residues 80-92 (SKFKATYDGNHDT) lie on the Cytoplasmic side of the membrane. A helical transmembrane segment spans residues 93 to 110 (FRVEFLVIPTAILAFLVN). The Lumenal portion of the chain corresponds to 111–116 (HDFTPL). The helical transmembrane segment at 117-135 (EILWTFSIYLESVAILPQL) threads the bilayer. Residues 136-149 (FMVSKTGEAETITS) are Cytoplasmic-facing. Residues 150 to 168 (HYLFALGVYRTLYLFNWIW) form a helical membrane-spanning segment. Residues 159-169 (RTLYLFNWIWR) are interaction with the K-D-E-L motif on target proteins. Residues 169 to 178 (RYHFEGFFDL) are Lumenal-facing. The helical transmembrane segment at 179-199 (IAIVAGLVQTVLYCDFFYLYI) threads the bilayer. Residues 200-212 (TKVLKGKKLSLPA) are Cytoplasmic-facing. The tract at residues 204-207 (KGKK) is important for recycling of cargo proteins with the sequence motif K-D-E-L from the Golgi to the endoplasmic reticulum. At S209 the chain carries Phosphoserine; by PKA.

This sequence belongs to the ERD2 family. Upon ligand binding the receptor oligomerizes and interacts with components of the transport machinery such as ARFGAP1 and ARF1. Post-translationally, phosphorylation by PKA at Ser-209 is required for endoplasmic reticulum retention function.

It is found in the golgi apparatus membrane. The protein localises to the cytoplasmic vesicle. It localises to the COPI-coated vesicle membrane. The protein resides in the endoplasmic reticulum membrane. Its subcellular location is the endoplasmic reticulum-Golgi intermediate compartment membrane. Functionally, receptor for the C-terminal sequence motif K-D-E-L that is present on endoplasmic reticulum resident proteins and that mediates their recycling from the Golgi back to the endoplasmic reticulum. This chain is ER lumen protein-retaining receptor 1 (KDELR1), found in Bos taurus (Bovine).